The primary structure comprises 521 residues: Serine/threonine-protein kinase A (521 aa).

Residues tyrosine 15–isoleucine 289 enclose the Protein kinase domain. ATP-binding positions include valine 21–valine 29 and lysine 45. The active-site Proton acceptor is the aspartate 148.

This sequence belongs to the protein kinase superfamily. Ser/Thr protein kinase family. Post-translationally, autophosphorylated.

The catalysed reaction is L-seryl-[protein] + ATP = O-phospho-L-seryl-[protein] + ADP + H(+). It carries out the reaction L-threonyl-[protein] + ATP = O-phospho-L-threonyl-[protein] + ADP + H(+). In terms of biological role, protein kinase that regulates cellular motility via phosphorylation of membrane proteins. This Synechocystis sp. (strain ATCC 27184 / PCC 6803 / Kazusa) protein is Serine/threonine-protein kinase A (spkA).